The primary structure comprises 511 residues: Pickpocket protein 19 (511 aa).

2 helical membrane passes run 59-79 (LWLA…TVLM) and 471-491 (GIIS…LFVL).

Belongs to the amiloride-sensitive sodium channel (TC 1.A.6) family. As to expression, expressed in the tracheal system. Expressed in the taste-sensing terminal organ of the larval head. In adults, expressed in hairs on the tibia, femur and wing margin, but not in hairs on the tarsi of the leg.

It localises to the membrane. Its function is as follows. Part of a complex that plays a role in tracheal liquid clearance. In both larvae and adults, contributes to the behavioral response to salt. Probable role in sodium transport. The polypeptide is Pickpocket protein 19 (ppk19) (Drosophila melanogaster (Fruit fly)).